A 334-amino-acid chain; its full sequence is Ornithine carbamoyltransferase (334 aa).

Carbamoyl phosphate contacts are provided by residues 57 to 60 (STRT), Q84, R108, and 135 to 138 (HPTQ). L-ornithine is bound by residues N168, D233, and 237–238 (SM). Carbamoyl phosphate is bound by residues 275–276 (CL) and R320.

It belongs to the aspartate/ornithine carbamoyltransferase superfamily. OTCase family.

The protein resides in the cytoplasm. The enzyme catalyses carbamoyl phosphate + L-ornithine = L-citrulline + phosphate + H(+). The protein operates within amino-acid biosynthesis; L-arginine biosynthesis; L-arginine from L-ornithine and carbamoyl phosphate: step 1/3. Its function is as follows. Reversibly catalyzes the transfer of the carbamoyl group from carbamoyl phosphate (CP) to the N(epsilon) atom of ornithine (ORN) to produce L-citrulline. This is Ornithine carbamoyltransferase from Thermobifida fusca (strain YX).